The following is a 351-amino-acid chain: MTYAIVVADATKRYGDFVALDHVDFVVPTGSLTALLGPSGSGKSTLLRTIAGLDQPDTGTITINGRDVTRVPPQRRGIGFVFQHYAAFKHLTVRDNVAFGLKIRKRPKAEIKAKVDNLLQVVGLSGFQSRYPNQLSGGQRQRMALARALAVDPEVLLLDEPFGALDAKVREELRAWLRRLHDEVHVTTVLVTHDQAEALDVADRIAVLHKGRIEQVGSPTDVYDAPANAFVMSFLGAVSTLNGSLVRPHDIRVGRTPNMAVAAADGTAGSTGVLRAVVDRVVVLGFEVRVELTSAATGGAFTAQITRGDAEALALREGDTVYVRATRVPPIAGGVSGVDDAGVERVKVTST.

The ABC transporter domain maps to 5-235 (IVVADATKRY…PANAFVMSFL (231 aa)). Residue 37-44 (GPSGSGKS) participates in ATP binding.

It belongs to the ABC transporter superfamily. Sulfate/tungstate importer (TC 3.A.1.6) family. As to quaternary structure, the complex is composed of two ATP-binding proteins (CysA), two transmembrane proteins (CysT and CysW) and a solute-binding protein (CysP).

Its subcellular location is the cell membrane. The enzyme catalyses sulfate(out) + ATP + H2O = sulfate(in) + ADP + phosphate + H(+). It carries out the reaction thiosulfate(out) + ATP + H2O = thiosulfate(in) + ADP + phosphate + H(+). Part of the ABC transporter complex CysAWTP involved in sulfate/thiosulfate import. Responsible for energy coupling to the transport system. The protein is Sulfate/thiosulfate import ATP-binding protein CysA of Mycobacterium bovis (strain ATCC BAA-935 / AF2122/97).